A 652-amino-acid chain; its full sequence is Probable L-type lectin-domain containing receptor kinase S.5 (652 aa).

The first 20 residues, 1–20 (MRFSLAWKLLFLILTCKIET), serve as a signal peptide directing secretion. At 21 to 266 (QVKCLKFDFP…EGLKIDGDGN (246 aa)) the chain is on the extracellular side. The segment at 24 to 257 (CLKFDFPGFN…LNCVRSWSFE (234 aa)) is legume-lectin like. N-linked (GlcNAc...) asparagine glycosylation is found at N33, N91, N97, N100, N122, N139, N201, and N244. A helical transmembrane segment spans residues 267 to 287 (MLWLWITIPIVFIVGIGAFLG). Topologically, residues 288–652 (ALYLRSRSKA…INSLTELTGR (365 aa)) are cytoplasmic. One can recognise a Protein kinase domain in the interval 330-622 (FGAENKLGQG…PDVPTERPAF (293 aa)). Residues 336-344 (LGQGGFGMV) and K357 each bind ATP. D455 (proton acceptor) is an active-site residue.

The protein in the C-terminal section; belongs to the protein kinase superfamily. Ser/Thr protein kinase family. It in the N-terminal section; belongs to the leguminous lectin family.

The protein localises to the cell membrane. It catalyses the reaction L-seryl-[protein] + ATP = O-phospho-L-seryl-[protein] + ADP + H(+). It carries out the reaction L-threonyl-[protein] + ATP = O-phospho-L-threonyl-[protein] + ADP + H(+). The sequence is that of Probable L-type lectin-domain containing receptor kinase S.5 (LECRKS5) from Arabidopsis thaliana (Mouse-ear cress).